Consider the following 264-residue polypeptide: Leukocyte receptor cluster member 1 (264 aa).

2 disordered regions span residues 1-37 and 49-76; these read MNIL…RERR and FLRK…SGPV. A compositionally biased stretch (basic and acidic residues) spans 12–37; the sequence is RNKDNVARVRRDEAQAREEEKERERR. Residues 16–46 adopt a coiled-coil conformation; that stretch reads NVARVRRDEAQAREEEKERERRVLLAQQEAR. Ser-59 is subject to Phosphoserine. Over residues 59 to 75 the composition is skewed to low complexity; that stretch reads SLPELEAAEAGAPGSGP. A coiled-coil region spans residues 89-115; it reads VIRGNKEYKEEKRQEKERQEKALGILT. The interval 118 to 264 is disordered; that stretch reads GQSAAEAQTQ…PRQQDPHLTH (147 aa). Basic and acidic residues-rich tracts occupy residues 146 to 162 and 170 to 214; these read PDEK…EMQK and HGGD…RSRA. Residues 196–222 adopt a coiled-coil conformation; the sequence is LDQLRAERLRREAAERSRAEALLARVQ. The residue at position 245 (Ser-245) is a Phosphoserine.

The protein is Leukocyte receptor cluster member 1 (LENG1) of Homo sapiens (Human).